We begin with the raw amino-acid sequence, 384 residues long: 1-deoxy-D-xylulose 5-phosphate reductoisomerase (384 aa).

7 residues coordinate NADPH: Thr10, Gly11, Ser12, Ile13, Arg37, Asn38, and Asn124. Lys125 contributes to the 1-deoxy-D-xylulose 5-phosphate binding site. An NADPH-binding site is contributed by Glu126. Position 150 (Asp150) interacts with Mn(2+). 1-deoxy-D-xylulose 5-phosphate is bound by residues Ser151, Glu152, Ser176, and His199. Mn(2+) is bound at residue Glu152. Gly205 lines the NADPH pocket. Residues Ser212, Asn217, Lys218, and Glu221 each contribute to the 1-deoxy-D-xylulose 5-phosphate site. Glu221 provides a ligand contact to Mn(2+).

It belongs to the DXR family. Requires Mg(2+) as cofactor. The cofactor is Mn(2+).

It carries out the reaction 2-C-methyl-D-erythritol 4-phosphate + NADP(+) = 1-deoxy-D-xylulose 5-phosphate + NADPH + H(+). Its pathway is isoprenoid biosynthesis; isopentenyl diphosphate biosynthesis via DXP pathway; isopentenyl diphosphate from 1-deoxy-D-xylulose 5-phosphate: step 1/6. Catalyzes the NADPH-dependent rearrangement and reduction of 1-deoxy-D-xylulose-5-phosphate (DXP) to 2-C-methyl-D-erythritol 4-phosphate (MEP). The polypeptide is 1-deoxy-D-xylulose 5-phosphate reductoisomerase (Clostridium perfringens (strain SM101 / Type A)).